The following is a 647-amino-acid chain: MQLSWKDIPTVAPANDLLDIVLNRTQRKTPTVIRPGFKITRIRAFYMRKVKYTGEGFVEKFEDILKGFPNINDVHPFHRDLMDTLYEKNHYKISLAAISRAKSLVEQVARDYVRLLKFGQSLFQCKQLKRAALGRMATIVKKLRDPLAYLEQVRQHIGRLPSIDPNTRTLLICGYPNVGKSSFLRCITKSDVDVQPYAFTTKSLYVGHFDYKYLRFQAIDTPGILDRPTEEMNNIEMQSIYAIAHLRSCVLYFMDLSEQCGFTIEAQVKLFHSIKPLFANKSVMVVINKTDIIRPEDLDEERAQLLESVKEVPGVEIMTSSCQLEENVMEVRNKACEKLLASRIENKLKSQSRINNVLNKIHVAQPQARDDVKRTPFIPESVKNLKKYDPEDPNRRKLARDIEAENGGAGVFNVNLKDKYLLEDDEWKNDIMPEILDGKNVYDFLDPEIAAKLQALEEEEEKLENEGFYNSDDEEEIYDGFEASEVDDIKEKAAWIRNRQKTMIAEARNRKSLKNKAIMPRSKLTKSFGKMEEHMSTLGHDMSALQDKQNRAARKNRYVERGSDVVFGDQDALTASTENGVKLRQTDRLLDGVADGSMRSKADRMAKMERRERNRHAKQGESDRHNAVSLSKHLFSGKRGVGKTDFR.

The OBG-type G domain maps to 168–340; sequence RTLLICGYPN…VRNKACEKLL (173 aa). Residues 174–181, 220–224, and 288–291 contribute to the GTP site; these read GYPNVGKS, DTPGI, and NKTD. At Ser563 the chain carries Phosphoserine. The segment at 594-647 is disordered; it reads ADGSMRSKADRMAKMERRERNRHAKQGESDRHNAVSLSKHLFSGKRGVGKTDFR. Over residues 598–626 the composition is skewed to basic and acidic residues; that stretch reads MRSKADRMAKMERRERNRHAKQGESDRHN.

Belongs to the TRAFAC class OBG-HflX-like GTPase superfamily. OBG GTPase family. NOG subfamily. In terms of assembly, associated with nucleolar and cytoplasmic pre-60S particles. Directly interacts with RLP24.

Its subcellular location is the nucleus. The protein localises to the nucleolus. Involved in the biogenesis of the 60S ribosomal subunit. The polypeptide is Nucleolar GTP-binding protein 1 (NOG1) (Saccharomyces cerevisiae (strain ATCC 204508 / S288c) (Baker's yeast)).